The sequence spans 1206 residues: Phosphoglucan, water dikinase, chloroplastic (1206 aa).

2 disordered regions span residues methionine 1–glycine 20 and arginine 52–lysine 71. The N-terminal 56 residues, methionine 1–serine 56, are a transit peptide targeting the chloroplast. The CBM20 domain occupies arginine 67–arginine 168. Histidine 776 (tele-phosphohistidine intermediate) is an active-site residue.

Belongs to the PEP-utilizing enzyme family. In terms of assembly, homodimer. The cofactor is Mg(2+).

The protein resides in the plastid. It localises to the chloroplast. The enzyme catalyses [(1-&gt;4)-6-phospho-alpha-D-glucosyl](n) + n ATP + n H2O = [(1-&gt;4)-3,6-bisphospho-alpha-D-glucosyl](n) + n AMP + n phosphate + 2n H(+). In terms of biological role, mediates the incorporation of phosphate into starch-like phospho-alpha-glucan, mostly at the C-3 position of glucose units. May be required for starch degradation, suggesting that the phosphate content of starch regulates its degradability. In Oryza sativa subsp. japonica (Rice), this protein is Phosphoglucan, water dikinase, chloroplastic (GWD3).